Here is a 748-residue protein sequence, read N- to C-terminus: Cytosolic phospholipase A2 (748 aa).

The tract at residues 1-178 (MSFIDPYQHI…MKSFLGEENS (178 aa)) is phospholipid binding. The C2 domain maps to 6–124 (PYQHIVVEHQ…GEKKEVQLTF (119 aa)). Residues Asp40, Thr41, Asp43, Asn65, Asp93, Ala94, and Asn95 each coordinate Ca(2+). The PLA2c domain maps to 138–740 (VCSSTDLRFS…SSVEARRFFN (603 aa)). The active-site Nucleophile is Ser228. The segment at 431–459 (SNDSSDSEDESQHPKGTENSEANEEYQNS) is disordered. Positions 449–459 (NSEANEEYQNS) are enriched in polar residues. At Ser505 the chain carries Phosphoserine; by MAPK. The active-site Proton acceptor is Asp549.

Activated by phosphorylation on a serine residue.

The protein localises to the cytoplasm. It is found in the cytoplasmic vesicle. The catalysed reaction is a 1,2-diacyl-sn-glycero-3-phosphocholine + H2O = a 1-acyl-sn-glycero-3-phosphocholine + a fatty acid + H(+). The enzyme catalyses a 1-acyl-sn-glycero-3-phosphocholine + H2O = sn-glycerol 3-phosphocholine + a fatty acid + H(+). With respect to regulation, stimulated by agonists such as ATP, EGF, thrombin and bradykinin as well as by cytosolic Ca(2+). Functionally, selectively hydrolyzes arachidonyl phospholipids in the sn-2 position releasing arachidonic acid. Together with its lysophospholipid activity, it is implicated in the initiation of the inflammatory response. The chain is Cytosolic phospholipase A2 (PLA2G4A) from Gallus gallus (Chicken).